A 3601-amino-acid chain; its full sequence is Protein SPIRRIG (3601 aa).

7 disordered regions span residues 17–50 (AQSS…PSSS), 398–426 (SSNH…ADFS), 449–476 (PAEP…TSSV), 638–657 (QYSG…SFRK), 1954–1993 (HIND…SLGS), 2009–2049 (ENIL…DFQD), and 2715–2747 (TTHV…EKEL). A compositionally biased stretch (low complexity) spans 32 to 50 (PPSSSSSSSSPSFTYPSSS). Composition is skewed to polar residues over residues 416–426 (NTNSTENADFS) and 458–476 (SRSS…TSSV). Over residues 1974–1991 (STKTSISVGSFPQGQVSL) the composition is skewed to polar residues. A compositionally biased stretch (basic and acidic residues) spans 2027–2048 (EDVKKQDDHHVGPSASSERDFQ). Positions 2715 to 2731 (TTHVKSETGSPRHSSSA) are enriched in polar residues. Positions 2732–2747 (KMDETNGREEKSEKEL) are enriched in basic and acidic residues. Residues 2760–2927 (EHLEKIRFRY…EREEVFKNLV (168 aa)) form the BEACH-type PH domain. A BEACH domain is found at 2952–3244 (GGRLFKLMAK…QLFPKAHVKR (293 aa)). WD repeat units follow at residues 3328–3367 (HESN…PRGS), 3378–3417 (AHTA…FVRQ), 3464–3507 (PSDS…DPVS), and 3540–3579 (FHKQ…LRAS).

Interacts with DCP1. In terms of tissue distribution, expressed in flowers, leaves, stems, hypocotyls and roots.

The protein resides in the cytoplasm. It localises to the P-body. Its function is as follows. Involved in cell morphogenesis. May have a function in membrane fusion or membrane composition. Required for salt stress tolerance. Regulates the salt stress-dependent post-transcriptional stabilization, cytoplasmic agglomeration, and localization to P-bodies of a subset of salt stress-regulated mRNAs. The protein is Protein SPIRRIG of Arabidopsis thaliana (Mouse-ear cress).